The following is a 288-amino-acid chain: MSKQLLALNIDGALLRSNGKIHQATKDAIEYVKKKGIYVTLVTNRHFRSAQKIAKSLKLDAKLITHSGAYIAEKIDAPFFEKRISDDHTFNIVQVLESYQCNIRLLHEKYSIGNKKKVNSNLLGKALIHPSDPIFYPVQFVESLSDLLMDEPVSAPVIEVYTEHDIQHDITETITKAFPAVDVIRVNDEKLNIVPKGVSKEAGLALVASELGLSMDDVVAIGHQYDDLPMIELAGLGVAMGNAVPEIKRKADWVTRSNDEQGVAYMMKEYFRMQQRKGFLDKFHMKRV.

This Bacillus subtilis (strain 168) protein is Stress response protein YhaX (yhaX).